We begin with the raw amino-acid sequence, 254 residues long: NFU1 iron-sulfur cluster scaffold homolog, mitochondrial (254 aa).

The N-terminal 9 residues, 1-9 (MAATARRGW), are a transit peptide targeting the mitochondrion. Positions 173–241 (IKELLDTRIR…IPEVEGVEQV (69 aa)) are nifU. Residues Cys210 and Cys213 each coordinate [4Fe-4S] cluster.

The protein belongs to the NifU family. Monomer and homohexamer; the apo-NFU1 is a monomer, while the holo-NFU1 is a hexamer composed of a trimer of dimer that is probably linked by some 4Fe-4S cluster. Interacts with HIRA and EPM2A/laforin. Interacts with BOLA3. Interacts with HSPA9. Ubiquitous. Expression in adult lung is weak compared to fetal lung.

The protein resides in the mitochondrion. It is found in the cytoplasm. It localises to the cytosol. In terms of biological role, iron-sulfur cluster scaffold protein which can assemble [4Fe-4S] clusters and deliver them to target proteins. This chain is NFU1 iron-sulfur cluster scaffold homolog, mitochondrial (NFU1), found in Homo sapiens (Human).